Consider the following 256-residue polypeptide: Ribonuclease HII (256 aa).

The RNase H type-2 domain occupies 72-256; the sequence is ALICGIDEVG…TFEPIKSLVN (185 aa). 3 residues coordinate a divalent metal cation: Asp78, Glu79, and Asp170.

It belongs to the RNase HII family. The cofactor is Mn(2+). It depends on Mg(2+) as a cofactor.

The protein localises to the cytoplasm. It carries out the reaction Endonucleolytic cleavage to 5'-phosphomonoester.. In terms of biological role, endonuclease that specifically degrades the RNA of RNA-DNA hybrids. The protein is Ribonuclease HII of Staphylococcus saprophyticus subsp. saprophyticus (strain ATCC 15305 / DSM 20229 / NCIMB 8711 / NCTC 7292 / S-41).